Here is a 264-residue protein sequence, read N- to C-terminus: tRNA (guanine-N(1)-)-methyltransferase (264 aa).

S-adenosyl-L-methionine-binding positions include Gly125 and 145-150 (LGDFVL).

It belongs to the RNA methyltransferase TrmD family. As to quaternary structure, homodimer.

The protein resides in the cytoplasm. It catalyses the reaction guanosine(37) in tRNA + S-adenosyl-L-methionine = N(1)-methylguanosine(37) in tRNA + S-adenosyl-L-homocysteine + H(+). Functionally, specifically methylates guanosine-37 in various tRNAs. The sequence is that of tRNA (guanine-N(1)-)-methyltransferase from Burkholderia ambifaria (strain MC40-6).